The primary structure comprises 304 residues: Cell surface-binding protein OPG105 (304 aa).

The region spanning 1–235 (MPQQLSPINI…NDDTQVYYSG (235 aa)) is the Alpha-carbonic anhydrase domain. At 1–275 (MPQQLSPINI…YQKYIEGNKT (275 aa)) the chain is on the virion surface side. Residues 276–294 (FAIIAIVFVFILTAILFLM) form a helical membrane-spanning segment. Residues 295–304 (SRRYSREKQN) lie on the Intravirion side of the membrane.

The protein belongs to the alpha-carbonic anhydrase family. Homodimer; disulfide-linked. In terms of processing, apparently non-glycosylated.

Its subcellular location is the virion membrane. Functionally, binds to chondroitin sulfate on the cell surface to provide virion attachment to target cell. The sequence is that of Cell surface-binding protein OPG105 (OPG105) from Vaccinia virus (strain Copenhagen) (VACV).